The chain runs to 364 residues: Phosphoserine aminotransferase (364 aa).

Arg42 provides a ligand contact to L-glutamate. Residues 76–77 (AS), Trp100, Thr150, Asp169, and Gln192 contribute to the pyridoxal 5'-phosphate site. Position 193 is an N6-(pyridoxal phosphate)lysine (Lys193). 234-235 (NT) provides a ligand contact to pyridoxal 5'-phosphate.

Belongs to the class-V pyridoxal-phosphate-dependent aminotransferase family. SerC subfamily. As to quaternary structure, homodimer. The cofactor is pyridoxal 5'-phosphate.

Its subcellular location is the cytoplasm. The catalysed reaction is O-phospho-L-serine + 2-oxoglutarate = 3-phosphooxypyruvate + L-glutamate. It catalyses the reaction 4-(phosphooxy)-L-threonine + 2-oxoglutarate = (R)-3-hydroxy-2-oxo-4-phosphooxybutanoate + L-glutamate. It participates in amino-acid biosynthesis; L-serine biosynthesis; L-serine from 3-phospho-D-glycerate: step 2/3. Catalyzes the reversible conversion of 3-phosphohydroxypyruvate to phosphoserine and of 3-hydroxy-2-oxo-4-phosphonooxybutanoate to phosphohydroxythreonine. This is Phosphoserine aminotransferase from Shouchella clausii (strain KSM-K16) (Alkalihalobacillus clausii).